We begin with the raw amino-acid sequence, 103 residues long: Large ribosomal subunit protein bL21 (103 aa).

This sequence belongs to the bacterial ribosomal protein bL21 family. In terms of assembly, part of the 50S ribosomal subunit. Contacts protein L20.

In terms of biological role, this protein binds to 23S rRNA in the presence of protein L20. This is Large ribosomal subunit protein bL21 from Shewanella loihica (strain ATCC BAA-1088 / PV-4).